Here is a 361-residue protein sequence, read N- to C-terminus: Chorismate synthase (361 aa).

Residues Thr37–Arg59 form a disordered region. The segment covering Asp40 to Arg49 has biased composition (basic and acidic residues). NADP(+) contacts are provided by Arg48 and Arg54. Residues Arg125–Ser127, Asn238–Ala239, Gly278, Lys293–Ser297, and Arg319 contribute to the FMN site.

It belongs to the chorismate synthase family. Homotetramer. It depends on FMNH2 as a cofactor.

The catalysed reaction is 5-O-(1-carboxyvinyl)-3-phosphoshikimate = chorismate + phosphate. Its pathway is metabolic intermediate biosynthesis; chorismate biosynthesis; chorismate from D-erythrose 4-phosphate and phosphoenolpyruvate: step 7/7. In terms of biological role, catalyzes the anti-1,4-elimination of the C-3 phosphate and the C-6 proR hydrogen from 5-enolpyruvylshikimate-3-phosphate (EPSP) to yield chorismate, which is the branch point compound that serves as the starting substrate for the three terminal pathways of aromatic amino acid biosynthesis. This reaction introduces a second double bond into the aromatic ring system. The polypeptide is Chorismate synthase (Serratia proteamaculans (strain 568)).